Consider the following 185-residue polypeptide: Thymidine kinase (185 aa).

Residues 10-17 (GPMYSGKT) and 83-86 (DEVQ) each bind ATP. The active-site Proton acceptor is Glu-84. Residues Cys-140, Cys-143, Cys-173, and Cys-176 each coordinate Zn(2+).

It belongs to the thymidine kinase family. As to quaternary structure, homotetramer.

The protein resides in the cytoplasm. It catalyses the reaction thymidine + ATP = dTMP + ADP + H(+). The protein is Thymidine kinase of Pseudothermotoga lettingae (strain ATCC BAA-301 / DSM 14385 / NBRC 107922 / TMO) (Thermotoga lettingae).